The sequence spans 444 residues: Phosphoglucosamine mutase (444 aa).

The active-site Phosphoserine intermediate is S102. 4 residues coordinate Mg(2+): S102, D241, D243, and D245. S102 carries the phosphoserine modification.

It belongs to the phosphohexose mutase family. Mg(2+) is required as a cofactor. Post-translationally, activated by phosphorylation.

The enzyme catalyses alpha-D-glucosamine 1-phosphate = D-glucosamine 6-phosphate. In terms of biological role, catalyzes the conversion of glucosamine-6-phosphate to glucosamine-1-phosphate. The protein is Phosphoglucosamine mutase of Buchnera aphidicola subsp. Acyrthosiphon pisum (strain 5A).